Here is a 510-residue protein sequence, read N- to C-terminus: Light-independent protochlorophyllide reductase subunit B (510 aa).

Asp36 is a [4Fe-4S] cluster binding site. The Proton donor role is filled by Asp297. 432–433 (GM) serves as a coordination point for substrate.

It belongs to the ChlB/BchB/BchZ family. Protochlorophyllide reductase is composed of three subunits; ChlL, ChlN and ChlB. Forms a heterotetramer of two ChlB and two ChlN subunits. [4Fe-4S] cluster serves as cofactor.

It localises to the plastid. It is found in the chloroplast. It carries out the reaction chlorophyllide a + oxidized 2[4Fe-4S]-[ferredoxin] + 2 ADP + 2 phosphate = protochlorophyllide a + reduced 2[4Fe-4S]-[ferredoxin] + 2 ATP + 2 H2O. It participates in porphyrin-containing compound metabolism; chlorophyll biosynthesis (light-independent). Functionally, component of the dark-operative protochlorophyllide reductase (DPOR) that uses Mg-ATP and reduced ferredoxin to reduce ring D of protochlorophyllide (Pchlide) to form chlorophyllide a (Chlide). This reaction is light-independent. The NB-protein (ChlN-ChlB) is the catalytic component of the complex. The sequence is that of Light-independent protochlorophyllide reductase subunit B from Pinus thunbergii (Japanese black pine).